A 284-amino-acid chain; its full sequence is Rubber cis-polyprenyltransferase HRT2 (284 aa).

The active site involves Asp-41.

The protein belongs to the UPP synthase family. In terms of tissue distribution, predominantly expressed in latex.

It carries out the reaction (cis-prenyl)(n)-diphosphate + isopentenyl diphosphate = (cis-prenyl)(n+1)-diphosphate + diphosphate. In terms of biological role, proposed to be involved in rubber biosynthesis as a particle-bound rubber transferase responsible for the cis-1,4-polymerization of isoprene subunits. Probably requires additional factors for the production of high molecular mass rubber. The protein is Rubber cis-polyprenyltransferase HRT2 (HRT2) of Hevea brasiliensis (Para rubber tree).